Reading from the N-terminus, the 136-residue chain is Group 1 truncated hemoglobin GlbN (136 aa).

H81 provides a ligand contact to heme.

Belongs to the truncated hemoglobin family. Group I subfamily. In terms of assembly, homodimer. Heme is required as a cofactor.

Functionally, binds oxygen cooperatively with very high affinity (P(50) = 0.013 mmHg at 20 degrees Celsius) because of a fast combination (25 microM(-1)sec(-1)) and a slow dissociation (0.2 sec(-1)) rate. This chain is Group 1 truncated hemoglobin GlbN (glbN), found in Mycobacterium bovis (strain ATCC BAA-935 / AF2122/97).